Reading from the N-terminus, the 201-residue chain is Recombination protein RecR (201 aa).

The segment at 60–75 adopts a C4-type zinc-finger fold; that stretch reads CSCCGNVDTIDPCTVC. The Toprim domain occupies 83–178; the sequence is SVIIVVEDVA…KITRLAHGVP (96 aa).

This sequence belongs to the RecR family.

In terms of biological role, may play a role in DNA repair. It seems to be involved in an RecBC-independent recombinational process of DNA repair. It may act with RecF and RecO. The protein is Recombination protein RecR of Sinorhizobium fredii (strain NBRC 101917 / NGR234).